The chain runs to 974 residues: Pentatricopeptide repeat-containing protein At5g61990, mitochondrial (974 aa).

A mitochondrion-targeting transit peptide spans 1-31 (MMGSMLFRKRTLVTRANFLLFRSFSVNVEKL). PPR repeat units follow at residues 96–130 (KLDS…NWPV), 150–184 (DGVL…ELVP), 185–219 (RLSR…NVVF), 220–250 (DVKT…TEKE), 257–275 (NVDG…GLVP), 276–310 (LKYT…GVSL), 311–345 (DNHT…GINI), 346–380 (KPYM…GLIP), 381–415 (QAQA…NIVI), 416–450 (SPYT…GCRP), 451–485 (NVVI…GIAP), 486–520 (DIFC…GLKP), 521–555 (NAFT…GVLP), 556–590 (NKVL…GILG), 591–625 (DAKT…GIAP), 626–660 (DVFS…GLTP), 661–695 (NVII…GLHP), 696–730 (NAVT…GLVP), 731–761 (DSFV…NKKG), 765–799 (STAP…SFDR), 804–838 (NDVT…NLMP), 839–873 (TVIT…GIEP), 874–908 (DHIM…NAVD), and 914–948 (SIST…QYIP).

It belongs to the PPR family. P subfamily.

Its subcellular location is the mitochondrion. The protein is Pentatricopeptide repeat-containing protein At5g61990, mitochondrial of Arabidopsis thaliana (Mouse-ear cress).